A 352-amino-acid polypeptide reads, in one-letter code: Photosystem II protein D1 (352 aa).

Position 2 is an N-acetylthreonine (Thr2). The residue at position 2 (Thr2) is a Phosphothreonine. 3 consecutive transmembrane segments (helical) span residues 29–46, 118–133, and 142–156; these read YIGW…TATS, HFLL…EWEL, and WIAV…AATA. Residue His118 participates in chlorophyll a binding. A pheophytin a-binding site is contributed by Tyr126. The [CaMn4O5] cluster site is built by Asp170 and Glu189. A helical membrane pass occupies residues 197–218; the sequence is FHMLGVAGVFGGSLFSAMHGSL. His198 contacts chlorophyll a. Residues His215 and 264–265 each bind a quinone; that span reads SF. His215 contacts Fe cation. A Fe cation-binding site is contributed by His272. The helical transmembrane segment at 274 to 288 threads the bilayer; that stretch reads FLAAWPVVGIWFTAL. Residues His332, Glu333, Asp342, and Ala344 each contribute to the [CaMn4O5] cluster site. The propeptide occupies 345–352; the sequence is SVEAPVVG.

This sequence belongs to the reaction center PufL/M/PsbA/D family. As to quaternary structure, PSII is composed of 1 copy each of membrane proteins PsbA, PsbB, PsbC, PsbD, PsbE, PsbF, PsbH, PsbI, PsbJ, PsbK, PsbL, PsbM, PsbT, PsbX, PsbY, PsbZ, Psb30/Ycf12, at least 3 peripheral proteins of the oxygen-evolving complex and a large number of cofactors. It forms dimeric complexes. It depends on The D1/D2 heterodimer binds P680, chlorophylls that are the primary electron donor of PSII, and subsequent electron acceptors. It shares a non-heme iron and each subunit binds pheophytin, quinone, additional chlorophylls, carotenoids and lipids. D1 provides most of the ligands for the Mn4-Ca-O5 cluster of the oxygen-evolving complex (OEC). There is also a Cl(-1) ion associated with D1 and D2, which is required for oxygen evolution. The PSII complex binds additional chlorophylls, carotenoids and specific lipids. as a cofactor. Post-translationally, tyr-161 forms a radical intermediate that is referred to as redox-active TyrZ, YZ or Y-Z. In terms of processing, C-terminally processed by CTPA; processing is essential to allow assembly of the oxygen-evolving complex and thus photosynthetic growth.

It is found in the plastid. The protein resides in the chloroplast thylakoid membrane. It carries out the reaction 2 a plastoquinone + 4 hnu + 2 H2O = 2 a plastoquinol + O2. Photosystem II (PSII) is a light-driven water:plastoquinone oxidoreductase that uses light energy to abstract electrons from H(2)O, generating O(2) and a proton gradient subsequently used for ATP formation. It consists of a core antenna complex that captures photons, and an electron transfer chain that converts photonic excitation into a charge separation. The D1/D2 (PsbA/PsbD) reaction center heterodimer binds P680, the primary electron donor of PSII as well as several subsequent electron acceptors. The chain is Photosystem II protein D1 from Zygnema circumcarinatum (Green alga).